Consider the following 463-residue polypeptide: Retinoic acid receptor RXR-gamma (463 aa).

The segment at methionine 1–isoleucine 138 is modulating. Residues serine 18–proline 53 form a disordered region. The segment covering histidine 21–leucine 33 has biased composition (polar residues). Positions lysine 136 to glutamate 211 form a DNA-binding region, nuclear receptor. NR C4-type zinc fingers lie at residues cysteine 139–cysteine 159 and cysteine 175–cysteine 199. Residues lysine 205–glycine 230 form a hinge region. Positions histidine 231–proline 459 constitute an NR LBD domain.

This sequence belongs to the nuclear hormone receptor family. NR2 subfamily. As to quaternary structure, homodimer. Heterodimer with a RAR molecule. Binds DNA preferentially as a RAR/RXR heterodimer. Interacts with RARA. In terms of processing, acetylated by EP300. In terms of tissue distribution, expressed in aortic endothelial cells (at protein level).

The protein resides in the nucleus. It localises to the cytoplasm. Its function is as follows. Receptor for retinoic acid. Retinoic acid receptors bind as heterodimers to their target response elements in response to their ligands, all-trans or 9-cis retinoic acid, and regulate gene expression in various biological processes. The RAR/RXR heterodimers bind to the retinoic acid response elements (RARE) composed of tandem 5'-AGGTCA-3' sites known as DR1-DR5. The high affinity ligand for RXRs is 9-cis retinoic acid. This is Retinoic acid receptor RXR-gamma (RXRG) from Homo sapiens (Human).